Here is a 70-residue protein sequence, read N- to C-terminus: Squirrel monkey agnoprotein (70 aa).

As to quaternary structure, interacts with VP1. Interacts with Large T antigen. Interacts with small t antigen. In terms of processing, phosphorylated by host PKC. Phosphorylation alters the stability and may also have an impact on the subcellular location.

Its subcellular location is the host cytoplasm. The protein localises to the host nucleus. In terms of biological role, alters the structure of the nuclear envelope. Involved in the perinuclear-nuclear localization of the capsid protein VP1 during virion assembly and maturation. May contribute to viral genome transcription and translation of viral late proteins. Plays an important role in the release of progeny virions from infected cells and in viral propagation. The polypeptide is Squirrel monkey agnoprotein (agnogene) (Saimiri boliviensis boliviensis (Bolivian squirrel monkey)).